Consider the following 285-residue polypeptide: Phosphatidylserine decarboxylase proenzyme (285 aa).

Active-site charge relay system; for autoendoproteolytic cleavage activity residues include Asp-89, His-146, and Ser-252. Catalysis depends on Ser-252, which acts as the Schiff-base intermediate with substrate; via pyruvic acid; for decarboxylase activity. Residue Ser-252 is modified to Pyruvic acid (Ser); by autocatalysis.

Belongs to the phosphatidylserine decarboxylase family. PSD-B subfamily. Prokaryotic type I sub-subfamily. As to quaternary structure, heterodimer of a large membrane-associated beta subunit and a small pyruvoyl-containing alpha subunit. It depends on pyruvate as a cofactor. Is synthesized initially as an inactive proenzyme. Formation of the active enzyme involves a self-maturation process in which the active site pyruvoyl group is generated from an internal serine residue via an autocatalytic post-translational modification. Two non-identical subunits are generated from the proenzyme in this reaction, and the pyruvate is formed at the N-terminus of the alpha chain, which is derived from the carboxyl end of the proenzyme. The autoendoproteolytic cleavage occurs by a canonical serine protease mechanism, in which the side chain hydroxyl group of the serine supplies its oxygen atom to form the C-terminus of the beta chain, while the remainder of the serine residue undergoes an oxidative deamination to produce ammonia and the pyruvoyl prosthetic group on the alpha chain. During this reaction, the Ser that is part of the protease active site of the proenzyme becomes the pyruvoyl prosthetic group, which constitutes an essential element of the active site of the mature decarboxylase.

It is found in the cell membrane. It catalyses the reaction a 1,2-diacyl-sn-glycero-3-phospho-L-serine + H(+) = a 1,2-diacyl-sn-glycero-3-phosphoethanolamine + CO2. Its pathway is phospholipid metabolism; phosphatidylethanolamine biosynthesis; phosphatidylethanolamine from CDP-diacylglycerol: step 2/2. Catalyzes the formation of phosphatidylethanolamine (PtdEtn) from phosphatidylserine (PtdSer). In Vibrio vulnificus (strain CMCP6), this protein is Phosphatidylserine decarboxylase proenzyme.